The following is a 110-amino-acid chain: NADH dehydrogenase [ubiquinone] iron-sulfur protein 6, mitochondrial (110 aa).

The transit peptide at 1–22 (MASNLLKALIRSQILPSSRRNF) directs the protein to the mitochondrion.

Belongs to the complex I NDUFS6 subunit family. In terms of assembly, complex I is composed of at least 49 different subunits. This is a component of the iron-sulfur (IP) fragment of the enzyme.

The protein localises to the mitochondrion inner membrane. In terms of biological role, accessory subunit of the mitochondrial membrane respiratory chain NADH dehydrogenase (Complex I), that is believed not to be involved in catalysis. Complex I functions in the transfer of electrons from NADH to the respiratory chain. The immediate electron acceptor for the enzyme is believed to be ubiquinone. The chain is NADH dehydrogenase [ubiquinone] iron-sulfur protein 6, mitochondrial from Arabidopsis thaliana (Mouse-ear cress).